Consider the following 169-residue polypeptide: uncharacterized protein (169 aa).

2 helical membrane passes run 10–30 (NVHMYDVAIILILIIVVFKLI) and 149–169 (IPLAFVQMIAISIALICLLIP).

It is found in the membrane. This is an uncharacterized protein from Dictyostelium discoideum (Social amoeba).